The chain runs to 197 residues: Transmembrane protein 126A (197 aa).

The Mitochondrial matrix portion of the chain corresponds to 1-35 (MENHEPDGTIIKENLTDIIARKINQLPEAERNLLE). Residues 36-56 (NGSTYVGLNAALCGLIANSLF) form a helical membrane-spanning segment. The Mitochondrial intermembrane portion of the chain corresponds to 57-58 (RR). The helical transmembrane segment at 59-79 (ILHVTQARIAAGLPMAVIPFL) threads the bilayer. The Mitochondrial matrix segment spans residues 80-107 (TANVSYKGFVSLPLNTGDLQCETCTVTR). A helical membrane pass occupies residues 108 to 128 (GGLVGLVFGGLYPVFLAIPVN). The Mitochondrial intermembrane segment spans residues 129–160 (GGLAARYNSALLPEKGNILNYWIRISKPVFRK). The chain crosses the membrane as a helical span at residues 161–177 (MLFPILLQTGFAAYLGS). The Mitochondrial matrix segment spans residues 178–197 (RQYKLLIKALQLPEPGLEIE).

This sequence belongs to the TMEM126 family. As to quaternary structure, interacts with OXA1L; promoting cotranslational quality control in mitochondria.

The protein localises to the mitochondrion inner membrane. In terms of biological role, protein required for the cotranslational protein quality control in the inner membrane of the mitochondria. Associates with newly synthesized polypeptides and may act as a chaperone that cooperates with OXA1L for the insertion of newly synthesized mitochondrial proteins into the inner membrane. Required for the assembly of the ND4 module of mitochondrial complex I. The sequence is that of Transmembrane protein 126A (TMEM126A) from Bos taurus (Bovine).